Consider the following 201-residue polypeptide: Large ribosomal subunit protein uL4 (201 aa).

The disordered stretch occupies residues 45–72; that stretch reads AQKTRAEVTGSGKKPWRQKGTGRARAGS.

Belongs to the universal ribosomal protein uL4 family. In terms of assembly, part of the 50S ribosomal subunit.

Its function is as follows. One of the primary rRNA binding proteins, this protein initially binds near the 5'-end of the 23S rRNA. It is important during the early stages of 50S assembly. It makes multiple contacts with different domains of the 23S rRNA in the assembled 50S subunit and ribosome. In terms of biological role, forms part of the polypeptide exit tunnel. In Shewanella frigidimarina (strain NCIMB 400), this protein is Large ribosomal subunit protein uL4.